We begin with the raw amino-acid sequence, 443 residues long: ATP-dependent protease ATPase subunit HslU (443 aa).

ATP contacts are provided by residues isoleucine 18, 60–65 (GVGKTE), aspartate 256, glutamate 321, and arginine 393.

It belongs to the ClpX chaperone family. HslU subfamily. In terms of assembly, a double ring-shaped homohexamer of HslV is capped on each side by a ring-shaped HslU homohexamer. The assembly of the HslU/HslV complex is dependent on binding of ATP.

Its subcellular location is the cytoplasm. ATPase subunit of a proteasome-like degradation complex; this subunit has chaperone activity. The binding of ATP and its subsequent hydrolysis by HslU are essential for unfolding of protein substrates subsequently hydrolyzed by HslV. HslU recognizes the N-terminal part of its protein substrates and unfolds these before they are guided to HslV for hydrolysis. The protein is ATP-dependent protease ATPase subunit HslU of Escherichia coli O139:H28 (strain E24377A / ETEC).